Reading from the N-terminus, the 445-residue chain is MLFLYRDEAVLTLDAFEQCLKDCFPQGLNGKKTAVALSGGLDSVVLLHLLVCAGKRAGFVPEALHIHHGLSPRADDWADFCRNYCDMLGVGLETVKVCVEKNGLGIEAAARQKRYAEFAEKGFDVLALAHHRDDQIETFMLAVARGGGLRALAAMPAVRPLGENGIIWRPLLPFSRQDIWDYARKHGLPNIEDESNTDTAYLRNRFRHRILPELSAQIPHFGRHVLNNVRALQEDLALLEEVVVQDCRWVCGAGYFDTARWLTFSPRRKTHILRNFLKENGIPVPNQNALADIARVLTEAKTGRWNLQGFELHHYAGRLFVFASEQLAKPAFLKDGTISGNLKKILTEHRFVLKRHPFGLPEAMLEQDGILRTVAASDTLAVGGIHKNVKKILQGKRVLPFLRPIWPLVADSGNRPLALANCCADFQISVSDGILPVHPDFPILF.

Residue 38–43 coordinates ATP; it reads SGGLDS.

This sequence belongs to the tRNA(Ile)-lysidine synthase family.

The protein resides in the cytoplasm. It catalyses the reaction cytidine(34) in tRNA(Ile2) + L-lysine + ATP = lysidine(34) in tRNA(Ile2) + AMP + diphosphate + H(+). Its function is as follows. Ligates lysine onto the cytidine present at position 34 of the AUA codon-specific tRNA(Ile) that contains the anticodon CAU, in an ATP-dependent manner. Cytidine is converted to lysidine, thus changing the amino acid specificity of the tRNA from methionine to isoleucine. This Neisseria gonorrhoeae (strain ATCC 700825 / FA 1090) protein is tRNA(Ile)-lysidine synthase.